The primary structure comprises 407 residues: Ornithine cyclodeaminase (407 aa).

10 residues coordinate NAD(+): Asn-233, Ala-234, Asp-312, Thr-344, Met-345, Leu-346, His-347, Asp-365, Asp-388, and Val-389.

Belongs to the AgrE/ArgZ ornithine cyclodeaminase family. The cofactor is NAD(+).

It carries out the reaction L-ornithine = L-proline + NH4(+). In terms of biological role, catalyzes the conversion of ornithine to proline, with the release of ammonia. The chain is Ornithine cyclodeaminase from Archaeoglobus fulgidus (strain ATCC 49558 / DSM 4304 / JCM 9628 / NBRC 100126 / VC-16).